A 1350-amino-acid chain; its full sequence is ABC transporter C family member 13 (1350 aa).

An ABC transmembrane type-1 1 domain is found at 107–390 (NKKSIFIVIL…LPEAIHNLLG (284 aa)). A run of 4 helical transmembrane segments spans residues 111–131 (IFIV…LKYF), 143–163 (TFLT…SYTL), 215–235 (IGLF…FPIQ), and 240–260 (LALL…VMII). The segment at 462-481 (EKSEEEYETTTTTTDDNNNN) is disordered. Residues 470 to 481 (TTTTTTDDNNNN) are compositionally biased toward low complexity. One can recognise an ABC transporter 1 domain in the interval 473-693 (TTTDDNNNNN…IDFESIMKTK (221 aa)). 505 to 512 (GVVGSGKT) contacts ATP. An ABC transmembrane type-1 2 domain is found at 774-1061 (KHGSSTFFFI…FVELEVKMNS (288 aa)). 6 consecutive transmembrane segments (helical) span residues 776 to 796 (GSST…QAIF), 816 to 836 (DSFY…TLVI), 887 to 907 (IDLL…TVVF), 909 to 929 (ICVM…LIIV), 1003 to 1023 (IGVR…FFSL), and 1029 to 1049 (GFSV…NWAV). Residues 1103–1337 (IEFRDVEIRY…KNSKFSKLVK (235 aa)) enclose the ABC transporter 2 domain. ATP is bound at residue 1137–1144 (GRTGAGKS).

This sequence belongs to the ABC transporter superfamily. ABCC family. Conjugate transporter (TC 3.A.1.208) subfamily.

The protein resides in the membrane. This Dictyostelium discoideum (Social amoeba) protein is ABC transporter C family member 13 (abcC13).